We begin with the raw amino-acid sequence, 584 residues long: Proline--tRNA ligase (584 aa).

This sequence belongs to the class-II aminoacyl-tRNA synthetase family. ProS type 1 subfamily. Homodimer.

The protein localises to the cytoplasm. It carries out the reaction tRNA(Pro) + L-proline + ATP = L-prolyl-tRNA(Pro) + AMP + diphosphate. In terms of biological role, catalyzes the attachment of proline to tRNA(Pro) in a two-step reaction: proline is first activated by ATP to form Pro-AMP and then transferred to the acceptor end of tRNA(Pro). As ProRS can inadvertently accommodate and process non-cognate amino acids such as alanine and cysteine, to avoid such errors it has two additional distinct editing activities against alanine. One activity is designated as 'pretransfer' editing and involves the tRNA(Pro)-independent hydrolysis of activated Ala-AMP. The other activity is designated 'posttransfer' editing and involves deacylation of mischarged Ala-tRNA(Pro). The misacylated Cys-tRNA(Pro) is not edited by ProRS. This Mycobacterium sp. (strain KMS) protein is Proline--tRNA ligase.